The primary structure comprises 156 residues: Glutaredoxin-2, mitochondrial (156 aa).

Residues 1–19 (MSWRRAASVGRRLVASGRI) constitute a mitochondrion transit peptide. Residues 50–150 (VNQIQETISN…PLVHQCYLKK (101 aa)) form the Glutaredoxin domain. Cysteine 61 is a binding site for [2Fe-2S] cluster. Lysine 67 lines the glutathione pocket. Cysteine 70 carries the S-glutathionyl cysteine; alternate modification. Cysteines 70 and 73 form a disulfide. Glutathione contacts are provided by glutamine 102 and valine 114. [2Fe-2S] cluster is bound at residue cysteine 146.

This sequence belongs to the glutaredoxin family. As to quaternary structure, monomer; active form. Homodimer; inactive form. The homodimer is probably linked by 1 2Fe-2S cluster. In terms of tissue distribution, widely expressed. Highly expressed in testis, and at much lower level in kidney and brain.

The protein resides in the mitochondrion. Its subcellular location is the nucleus. The 2Fe-2S present in the homodimer leads to inactivation of the enzyme. The 2Fe-2S may serve as a redox sensor: the presence of one-electron oxidants or reductants leading to the loss of the 2Fe-2S cluster, subsequent monomerization and activation of the enzyme. Glutathione-dependent oxidoreductase that facilitates the maintenance of mitochondrial redox homeostasis upon induction of apoptosis by oxidative stress. Involved in response to hydrogen peroxide and regulation of apoptosis caused by oxidative stress. Acts as a very efficient catalyst of monothiol reactions because of its high affinity for protein glutathione-mixed disulfides. Can receive electrons not only from glutathione (GSH), but also from thioredoxin reductase supporting both monothiol and dithiol reactions. Efficiently catalyzes both glutathionylation and deglutathionylation of mitochondrial complex I, which in turn regulates the superoxide production by the complex. Overexpression decreases the susceptibility to apoptosis and prevents loss of cardiolipin and cytochrome c release. The chain is Glutaredoxin-2, mitochondrial (Glrx2) from Mus musculus (Mouse).